Reading from the N-terminus, the 156-residue chain is V-type proton ATPase 16 kDa proteolipid subunit c (156 aa).

Residues 1 to 7 (MAENPIY) lie on the Lumenal side of the membrane. The helical transmembrane segment at 8–30 (GPFFGVMGAASAIIFSALGAAYG) threads the bilayer. The Cytoplasmic portion of the chain corresponds to 31–52 (TAKSGTGIAAMSVMRPELIMKS). A helical transmembrane segment spans residues 53 to 73 (IIPVVMAGIIAIYGLVVAVLI). Topologically, residues 74-92 (AGSLDAPSNNYTLYKGFIH) are lumenal. Residues 93–114 (LGAGLAVGFSGLAAGFAIGIVG) traverse the membrane as a helical segment. At 115 to 126 (DAGVRGTAQQPR) the chain is on the cytoplasmic side. A helical membrane pass occupies residues 127–152 (LFVGMILILIFAEVLGLYGLIVAIYL). The Lumenal segment spans residues 153-156 (YTKQ).

The protein belongs to the V-ATPase proteolipid subunit family. In terms of assembly, V-ATPase is a heteromultimeric enzyme made up of two complexes: the ATP-hydrolytic V1 complex and the proton translocation V0 complex. The V1 complex consists of three catalytic AB heterodimers that form a heterohexamer, three peripheral stalks each consisting of EG heterodimers, one central rotor including subunits D and F, and the regulatory subunits C and H. The proton translocation complex V0 consists of the proton transport subunit a, a ring of proteolipid subunits c9c'', rotary subunit d, subunits e and f, and the accessory subunits VhaAC45 and ATP6AP2.

The protein resides in the membrane. Proton-conducting pore forming subunit of the V0 complex of vacuolar(H+)-ATPase (V-ATPase), a multisubunit enzyme composed of a peripheral complex (V1) that hydrolyzes ATP and a membrane integral complex (V0) that translocates protons. V-ATPase is responsible for acidifying and maintaining the pH of intracellular compartments and in some cell types, is targeted to the plasma membrane, where it is responsible for acidifying the extracellular environment. The sequence is that of V-type proton ATPase 16 kDa proteolipid subunit c (VHA16) from Heliothis virescens (Tobacco budworm moth).